We begin with the raw amino-acid sequence, 594 residues long: Arrestin domain-containing protein C584.15c (594 aa).

Polar residues predominate over residues 368–398; the sequence is NPQLQSGFTTPNLSRRNSSDFGPNSPVNIHS. 2 disordered regions span residues 368–417 and 531–594; these read NPQL…NSNA and EATR…RGVR. Residues 404-417 show a composition bias toward low complexity; it reads SGQQPSSPASNSNA. A compositionally biased stretch (polar residues) spans 534-552; it reads RPSSPTESVEIPSNTTTIA. The segment covering 565–574 has biased composition (pro residues); it reads PSTPAPPLPS. At Ser-584 the chain carries Phosphoserine.

This sequence belongs to the arrestin family.

This chain is Arrestin domain-containing protein C584.15c, found in Schizosaccharomyces pombe (strain 972 / ATCC 24843) (Fission yeast).